The primary structure comprises 1224 residues: DNA-directed RNA polymerase subunit beta'' (1224 aa).

Zn(2+) contacts are provided by Cys223, Cys297, Cys304, and Cys307.

Belongs to the RNA polymerase beta' chain family. RpoC2 subfamily. As to quaternary structure, in plastids the minimal PEP RNA polymerase catalytic core is composed of four subunits: alpha, beta, beta', and beta''. When a (nuclear-encoded) sigma factor is associated with the core the holoenzyme is formed, which can initiate transcription. It depends on Zn(2+) as a cofactor.

It is found in the plastid. The protein localises to the chloroplast. The catalysed reaction is RNA(n) + a ribonucleoside 5'-triphosphate = RNA(n+1) + diphosphate. Functionally, DNA-dependent RNA polymerase catalyzes the transcription of DNA into RNA using the four ribonucleoside triphosphates as substrates. This chain is DNA-directed RNA polymerase subunit beta'', found in Porphyra purpurea (Red seaweed).